Reading from the N-terminus, the 309-residue chain is Homoserine kinase (309 aa).

91 to 101 is an ATP binding site; sequence PIGSGLGSSAC.

This sequence belongs to the GHMP kinase family. Homoserine kinase subfamily.

It localises to the cytoplasm. It catalyses the reaction L-homoserine + ATP = O-phospho-L-homoserine + ADP + H(+). Its pathway is amino-acid biosynthesis; L-threonine biosynthesis; L-threonine from L-aspartate: step 4/5. In terms of biological role, catalyzes the ATP-dependent phosphorylation of L-homoserine to L-homoserine phosphate. The sequence is that of Homoserine kinase from Salmonella arizonae (strain ATCC BAA-731 / CDC346-86 / RSK2980).